The chain runs to 145 residues: Transcriptional regulator MraZ (145 aa).

2 SpoVT-AbrB domains span residues 5-50 (TFNH…ALPQ) and 81-124 (AHEV…DKAA).

This sequence belongs to the MraZ family. As to quaternary structure, forms oligomers.

The protein resides in the cytoplasm. Its subcellular location is the nucleoid. This chain is Transcriptional regulator MraZ, found in Anaeromyxobacter sp. (strain Fw109-5).